The sequence spans 381 residues: Selenoprotein P (381 aa).

Positions 1–19 (MWRSLGLALALCLLPSGGT) are cleaved as a signal peptide. Residue Asn46 is glycosylated (N-linked (GlcNAc...) asparagine). Residue Sec59 is a non-standard amino acid, selenocysteine. Asn83 carries N-linked (GlcNAc...) (complex) asparagine glycosylation. N-linked (GlcNAc...) asparagine glycosylation is found at Asn119, Asn128, and Asn174. The tract at residues 200–268 (TPSPHYHHEH…ENRDMPASED (69 aa)) is disordered. The span at 204–216 (HYHHEHHHNHGHQ) shows a compositional bias: basic residues. Residues 218–230 (LGSSELSENQQPG) are compositionally biased toward polar residues. A compositionally biased stretch (basic residues) spans 243-255 (LHHHHKHKGQHRQ). Ser266 is subject to Phosphoserine. 3 non-standard amino acids (selenocysteine) are found at residues Sec300, Sec318, and Sec330. A glycan (N-linked (GlcNAc...) asparagine) is linked at Asn338. Residues Sec345, Sec352, Sec367, Sec369, Sec376, and Sec378 are each a non-standard amino acid (selenocysteine). The tract at residues 355–381 (SQQLIPTEASASURUKNQAKKUEUPSN) is disordered.

This sequence belongs to the selenoprotein P family. Post-translationally, phosphorylation sites are present in the extracellular medium. In terms of tissue distribution, made in the liver and heart and secreted into the plasma. It is also found in the kidney.

The protein localises to the secreted. Might be responsible for some of the extracellular antioxidant defense properties of selenium or might be involved in the transport of selenium. May supply selenium to tissues such as brain and testis. The sequence is that of Selenoprotein P from Homo sapiens (Human).